The chain runs to 110 residues: Large ribosomal subunit protein uL24 (110 aa).

This sequence belongs to the universal ribosomal protein uL24 family. Part of the 50S ribosomal subunit.

Its function is as follows. One of two assembly initiator proteins, it binds directly to the 5'-end of the 23S rRNA, where it nucleates assembly of the 50S subunit. One of the proteins that surrounds the polypeptide exit tunnel on the outside of the subunit. The sequence is that of Large ribosomal subunit protein uL24 from Roseiflexus castenholzii (strain DSM 13941 / HLO8).